Consider the following 92-residue polypeptide: Small ribosomal subunit protein uS19 (92 aa).

The protein belongs to the universal ribosomal protein uS19 family.

Protein S19 forms a complex with S13 that binds strongly to the 16S ribosomal RNA. This chain is Small ribosomal subunit protein uS19, found in Allorhizobium ampelinum (strain ATCC BAA-846 / DSM 112012 / S4) (Agrobacterium vitis (strain S4)).